The chain runs to 225 residues: Enolase-phosphatase E1 (225 aa).

This sequence belongs to the HAD-like hydrolase superfamily. MasA/MtnC family. Monomer. Mg(2+) is required as a cofactor.

It carries out the reaction 5-methylsulfanyl-2,3-dioxopentyl phosphate + H2O = 1,2-dihydroxy-5-(methylsulfanyl)pent-1-en-3-one + phosphate. The protein operates within amino-acid biosynthesis; L-methionine biosynthesis via salvage pathway; L-methionine from S-methyl-5-thio-alpha-D-ribose 1-phosphate: step 3/6. It participates in amino-acid biosynthesis; L-methionine biosynthesis via salvage pathway; L-methionine from S-methyl-5-thio-alpha-D-ribose 1-phosphate: step 4/6. In terms of biological role, bifunctional enzyme that catalyzes the enolization of 2,3-diketo-5-methylthiopentyl-1-phosphate (DK-MTP-1-P) into the intermediate 2-hydroxy-3-keto-5-methylthiopentenyl-1-phosphate (HK-MTPenyl-1-P), which is then dephosphorylated to form the acireductone 1,2-dihydroxy-3-keto-5-methylthiopentene (DHK-MTPene). The protein is Enolase-phosphatase E1 of Shewanella piezotolerans (strain WP3 / JCM 13877).